Here is a 339-residue protein sequence, read N- to C-terminus: Dicamba O-demethylase, oxygenase component (339 aa).

One can recognise a Rieske domain in the interval tryptophan 8–isoleucine 110. The [2Fe-2S] cluster site is built by cysteine 48, histidine 50, cysteine 67, and histidine 70. 2 residues coordinate Fe cation: histidine 159 and histidine 164. 3,6-dichloro-2-methoxybenzoate is bound by residues asparagine 229, histidine 250, and tryptophan 284. Aspartate 293 is a binding site for Fe cation.

In terms of assembly, homotrimer. The dicamba O-demethylase multicomponent enzyme system is composed of an oxygenase component (DdmC) and an electron transfer component formed by a ferredoxin reductase (DdmA) and a ferredoxin (DdmB). In vitro, dicamba O-demethylase assays in which DdmA2 is substituted for DdmA1 demonstrate that the two enzymes possess nearly identical activities. It depends on [2Fe-2S] cluster as a cofactor.

The catalysed reaction is 3,6-dichloro-2-methoxybenzoate + 2 reduced [2Fe-2S]-[ferredoxin] + O2 + 2 H(+) = 3,6-dichlorosalicylate + formaldehyde + 2 oxidized [2Fe-2S]-[ferredoxin] + H2O. Activity enhanced by Fe(2+) and Mg(2+) ions. Component of the dicamba O-demethylase multicomponent enzyme system involved in the degradation of the herbicide dicamba. In vitro, catalyzes the O-demethylation of 2-methoxy-3,6-dichlorobenzoic acid (dicamba) to yield 3,6-dichlorosalicylic acid (DCSA) via an exocyclic monooxygenation. The chain is Dicamba O-demethylase, oxygenase component from Stenotrophomonas maltophilia (Pseudomonas maltophilia).